The following is a 355-amino-acid chain: Protein RecA (355 aa).

Position 67 to 74 (67 to 74 (GPESSGKT)) interacts with ATP.

Belongs to the RecA family.

It localises to the cytoplasm. In terms of biological role, can catalyze the hydrolysis of ATP in the presence of single-stranded DNA, the ATP-dependent uptake of single-stranded DNA by duplex DNA, and the ATP-dependent hybridization of homologous single-stranded DNAs. It interacts with LexA causing its activation and leading to its autocatalytic cleavage. The sequence is that of Protein RecA from Shewanella baltica (strain OS223).